The primary structure comprises 131 residues: Small ribosomal subunit protein eS6 (131 aa).

Belongs to the eukaryotic ribosomal protein eS6 family.

The sequence is that of Small ribosomal subunit protein eS6 from Halobacterium salinarum (strain ATCC 29341 / DSM 671 / R1).